Reading from the N-terminus, the 1225-residue chain is DNA-directed RNA polymerase subunit beta' (1225 aa).

The Zn(2+) site is built by cysteine 60, cysteine 62, cysteine 75, and cysteine 78. Mg(2+)-binding residues include aspartate 450, aspartate 452, and aspartate 454. The Zn(2+) site is built by cysteine 818, cysteine 892, cysteine 899, and cysteine 902.

It belongs to the RNA polymerase beta' chain family. In terms of assembly, the RNAP catalytic core consists of 2 alpha, 1 beta, 1 beta' and 1 omega subunit. When a sigma factor is associated with the core the holoenzyme is formed, which can initiate transcription. Requires Mg(2+) as cofactor. It depends on Zn(2+) as a cofactor.

It catalyses the reaction RNA(n) + a ribonucleoside 5'-triphosphate = RNA(n+1) + diphosphate. Its function is as follows. DNA-dependent RNA polymerase catalyzes the transcription of DNA into RNA using the four ribonucleoside triphosphates as substrates. In Streptococcus pneumoniae (strain Hungary19A-6), this protein is DNA-directed RNA polymerase subunit beta'.